The primary structure comprises 321 residues: Sphingolipid delta(4)-desaturase DES1 (321 aa).

6 consecutive transmembrane segments (helical) span residues 41–61 (PNFKWVAGAMVLTQILALFVV), 68–88 (WLIVAAYCFGGIINHSLMLAV), 107–127 (ILGFICNLPIGLPMSISFKKY), 157–177 (FGKFLWVCLQPFFYIFRPLII), 187–206 (IINTVVQLTFNALIVYFLGW), and 208–230 (PLAYLLIGSILAMGLHPVAGHFI).

The protein belongs to the fatty acid desaturase type 1 family. DEGS subfamily. In terms of tissue distribution, testes.

The protein localises to the endoplasmic reticulum membrane. The protein resides in the membrane. It localises to the mitochondrion. It catalyses the reaction an N-acylsphinganine + 2 Fe(II)-[cytochrome b5] + O2 + 2 H(+) = an N-acylsphing-4-enine + 2 Fe(III)-[cytochrome b5] + 2 H2O. The catalysed reaction is an N-acyleicosasphinganine + 2 Fe(II)-[cytochrome b5] + O2 + 2 H(+) = an N-acyleicosasphing-4-enine + 2 Fe(III)-[cytochrome b5] + 2 H2O. It participates in sphingolipid metabolism. Its function is as follows. Has sphingolipid-delta-4-desaturase activity. Converts sphinganine-containing sphingolipids (such as N-acylsphinganines or dihydroceramides) into sphingolipids containing the delta-4-desaturated sphingoid base (E)-sphing-4-enine (such as N-acylsphing-4-enines or ceramides), which are required for many different functions (structural functions as well as signaling). Required to initiate spermatid differentiation among other signals. Required for central spindle assembly and cytokinesis during male meiosis, may act as part of an anchoring mechanism that links membrane-bounded cellular compartments to components of the cytoskeleton. In Drosophila melanogaster (Fruit fly), this protein is Sphingolipid delta(4)-desaturase DES1.